Here is a 347-residue protein sequence, read N- to C-terminus: UDP-3-O-acylglucosamine N-acyltransferase (347 aa).

Residue His248 is the Proton acceptor of the active site.

The protein belongs to the transferase hexapeptide repeat family. LpxD subfamily. As to quaternary structure, homotrimer.

It carries out the reaction a UDP-3-O-[(3R)-3-hydroxyacyl]-alpha-D-glucosamine + a (3R)-hydroxyacyl-[ACP] = a UDP-2-N,3-O-bis[(3R)-3-hydroxyacyl]-alpha-D-glucosamine + holo-[ACP] + H(+). It participates in bacterial outer membrane biogenesis; LPS lipid A biosynthesis. Its function is as follows. Catalyzes the N-acylation of UDP-3-O-acylglucosamine using 3-hydroxyacyl-ACP as the acyl donor. Is involved in the biosynthesis of lipid A, a phosphorylated glycolipid that anchors the lipopolysaccharide to the outer membrane of the cell. The protein is UDP-3-O-acylglucosamine N-acyltransferase of Synechococcus sp. (strain CC9902).